The primary structure comprises 330 residues: Type I restriction enzyme MpnII specificity subunit (330 aa).

It belongs to the type-I restriction system S methylase family. In terms of assembly, the methyltransferase is composed of M and S polypeptides.

In terms of biological role, the specificity (S) subunit of a type I restriction enzyme; this subunit dictates DNA sequence specificity. The M and S subunits together form a methyltransferase (MTase) that probably methylates A-2 on the top strand and A-3 on the bottom strand of the sequence 5'-GAN(7)TAY-3'. As the bacterial DNA is methylated on this sequence and this is the only type I methylase in the genome, it is probably responsible for all of the methylation on this site in the genome. The R subunit has multiple frameshifts and is probably not expressed in this bacteria. The chain is Type I restriction enzyme MpnII specificity subunit from Mycoplasma pneumoniae (strain ATCC 29342 / M129 / Subtype 1) (Mycoplasmoides pneumoniae).